The chain runs to 362 residues: S-adenosylmethionine:tRNA ribosyltransferase-isomerase (362 aa).

Belongs to the QueA family. As to quaternary structure, monomer.

Its subcellular location is the cytoplasm. It carries out the reaction 7-aminomethyl-7-carbaguanosine(34) in tRNA + S-adenosyl-L-methionine = epoxyqueuosine(34) in tRNA + adenine + L-methionine + 2 H(+). It functions in the pathway tRNA modification; tRNA-queuosine biosynthesis. Its function is as follows. Transfers and isomerizes the ribose moiety from AdoMet to the 7-aminomethyl group of 7-deazaguanine (preQ1-tRNA) to give epoxyqueuosine (oQ-tRNA). The polypeptide is S-adenosylmethionine:tRNA ribosyltransferase-isomerase (Methylobacterium sp. (strain 4-46)).